The sequence spans 382 residues: UDP-4-amino-4-deoxy-L-arabinose--oxoglutarate aminotransferase (382 aa).

At Lys-183 the chain carries N6-(pyridoxal phosphate)lysine.

Belongs to the DegT/DnrJ/EryC1 family. ArnB subfamily. As to quaternary structure, homodimer. The cofactor is pyridoxal 5'-phosphate.

It carries out the reaction UDP-4-amino-4-deoxy-beta-L-arabinose + 2-oxoglutarate = UDP-beta-L-threo-pentopyranos-4-ulose + L-glutamate. The protein operates within nucleotide-sugar biosynthesis; UDP-4-deoxy-4-formamido-beta-L-arabinose biosynthesis; UDP-4-deoxy-4-formamido-beta-L-arabinose from UDP-alpha-D-glucuronate: step 2/3. It functions in the pathway bacterial outer membrane biogenesis; lipopolysaccharide biosynthesis. Its function is as follows. Catalyzes the conversion of UDP-4-keto-arabinose (UDP-Ara4O) to UDP-4-amino-4-deoxy-L-arabinose (UDP-L-Ara4N). The modified arabinose is attached to lipid A and is required for resistance to polymyxin and cationic antimicrobial peptides. The polypeptide is UDP-4-amino-4-deoxy-L-arabinose--oxoglutarate aminotransferase (Pseudomonas syringae pv. syringae (strain B728a)).